Here is a 344-residue protein sequence, read N- to C-terminus: Acetylpolyamine amidohydrolase 2 (344 aa).

Catalysis depends on H159, which acts as the Proton donor/acceptor. Zn(2+)-binding residues include D195, H197, and D284.

It belongs to the histone deacetylase family. As to quaternary structure, homodimer. It depends on Zn(2+) as a cofactor.

The enzyme catalyses N-acetylputrescine + H2O = putrescine + acetate. It catalyses the reaction N-acetylcadaverine + H2O = cadaverine + acetate. Its pathway is amine and polyamine metabolism. Its function is as follows. Catalyzes the deacetylation of acetylated polyamines such as N-acetylputrescine and N-acetylcadaverine. Plays an important role in the metabolism of acetylated polyamines in P.aeruginosa. Is involved in the degradation pathways of N-acetylputrescine and N-acetylcadaverine, that allow P.aeruginosa to utilize these acetylpolyamines as a carbon source under glucose starvation. Shows nearly no activity against N(1)-acetylspermine and N(1)-acetylspermidine. Can also hydrolyze artificial trifluoroacetylated lysine-derivative, and to a lesser extent, acetylated lysine-derivative. This is Acetylpolyamine amidohydrolase 2 from Pseudomonas aeruginosa (strain ATCC 15692 / DSM 22644 / CIP 104116 / JCM 14847 / LMG 12228 / 1C / PRS 101 / PAO1).